Here is a 444-residue protein sequence, read N- to C-terminus: MKSLEEAQKFLEDHHVKYVLAQFVDIHGVAKVKSVPASHLNDILTTGAGFAGGAIWGTGIAPNGPDYMAIGELSTLSLIPWQPGYARLVCDGHVNGKPYEFDTRVVLKQQIARLAEKGWTLYTGLEPEFSLLKKDEHGAVHPFDDSDTLQKPCYDYKGITRHSPFLEKLTESLVEVGLDIYQIDHEDANGQFEINYTYADCLKSADDYIMFKMAASEIANELGIICSFMPKPFSNRPGNGMHMHMSIGDGKKSLFQDDSDPSGLGLSKLAYHFLGGILAHAPALAAVCAPTVNSYKRLVVGRSLSGATWAPAYIAYGNNNRSTLVRIPYGRLELRLPDGSCNPYLATAAVIAAGLDGVARELDPGTGRDDNLYDYSLEQLAEFGIGILPQNLGEALDALEADQVIMDAMGPGLSKEFVELKRMEWVDYMRHVSDWEINRYVQFY.

The GS beta-grasp domain maps to 14-97; sequence HHVKYVLAQF…LVCDGHVNGK (84 aa). The GS catalytic domain maps to 103-444; the sequence is TRVVLKQQIA…WEINRYVQFY (342 aa).

The protein belongs to the glutamine synthetase family. Type 3 subfamily. Mg(2+) is required as a cofactor.

It catalyses the reaction methylamine + L-glutamate + ATP = N(5)-methyl-L-glutamine + ADP + phosphate + H(+). The enzyme catalyses ethylamine + L-glutamate + ATP = N(5)-ethyl-L-glutamine + ADP + phosphate + H(+). Its activity is regulated as follows. Formation of theanine is repressed by a high concentration of glutamic acid. Catalyzes the formation of N(5)-methyl-L-glutamine from glutamate and methylamine. In vitro, can also use ethylamine, hydroxylamine and ammonia, with 75%, 40% and 1% activity compared to methylamine, respectively. The sequence is that of Glutamate--methylamine ligase from Methylovorus mays.